The chain runs to 93 residues: uncharacterized protein (93 aa).

The protein to M.tuberculosis Rv1738.

This is an uncharacterized protein from Mycobacterium tuberculosis (strain CDC 1551 / Oshkosh).